The following is a 756-amino-acid chain: Hyperosmolality-gated Ca2+ permeable channel 1.5 (756 aa).

The next 10 helical transmembrane spans lie at 7-27 (IGVA…AFAI), 101-121 (IYLL…TVMV), 154-174 (SRFW…CFVL), 373-393 (LVIA…IAFV), 425-445 (FLPG…LMLM), 465-485 (YYMF…TALQ), 510-530 (ATFF…GEIL), 574-594 (FILG…ILVF), 628-648 (VVIA…TKKA), and 651-671 (STPL…FCQG). Residues 731–756 (PDKTPDLVATKRGSRRFNSGSAETFT) form a disordered region. Residues 746 to 756 (RFNSGSAETFT) show a composition bias toward polar residues.

The protein belongs to the CSC1 (TC 1.A.17) family.

It is found in the membrane. Acts as an osmosensitive calcium-permeable cation channel. The chain is Hyperosmolality-gated Ca2+ permeable channel 1.5 from Arabidopsis thaliana (Mouse-ear cress).